We begin with the raw amino-acid sequence, 439 residues long: Trehalose-phosphatase (439 aa).

Residues D163 and D165 each contribute to the Mg(2+) site. The active-site Proton donor/acceptor is D165. A substrate-binding site is contributed by 282 to 284; that stretch reads QRK. Position 373 (D373) interacts with Mg(2+).

Belongs to the gob-1 trehalose phosphatase family. Requires Mg(2+) as cofactor. As to expression, ubiquitously expressed. Strong expression in intestine.

The enzyme catalyses alpha,alpha-trehalose 6-phosphate + H2O = alpha,alpha-trehalose + phosphate. Its function is as follows. Catalyzes the hydrolysis of trehalose 6-phosphate to trehalose and phosphate; prevents the accumulation of toxic levels of trehalose 6-phosphate. This chain is Trehalose-phosphatase, found in Caenorhabditis elegans.